The following is a 227-amino-acid chain: Prolactin (227 aa).

The N-terminal stretch at 1-28 (MNIKGSPWKGSLLLLLVSNLLLCQSVAP) is a signal peptide. A disulfide bridge connects residues C32 and C39. The residue at position 54 (S54) is a Phosphoserine. N59 carries N-linked (GlcNAc...) asparagine; partial glycosylation. Residues S62, S118, S163, and S194 each carry the phosphoserine modification. Disulfide bonds link C86–C202 and C219–C227.

It belongs to the somatotropin/prolactin family. Interacts with PRLR.

It localises to the secreted. In terms of biological role, prolactin acts primarily on the mammary gland by promoting lactation. In Homo sapiens (Human), this protein is Prolactin (PRL).